A 788-amino-acid chain; its full sequence is Protein kintoun (788 aa).

3 disordered regions span residues 194–249 (LRKP…SEQD), 415–438 (NNSE…EISP), and 628–754 (HKEH…SSSV). Basic and acidic residues predominate over residues 225–241 (GKEKKDQKRVIKEEHKQ). Positions 417–427 (SEGLTSESNLD) are enriched in polar residues. 2 stretches are compositionally biased toward basic and acidic residues: residues 628-644 (HKEH…DVGV) and 667-682 (ENTE…RYEE). Polar residues-rich tracts occupy residues 685 to 701 (STSC…QKDS) and 744 to 754 (NFDSRPASSSV).

The protein belongs to the PIH1 family. Kintoun subfamily.

It localises to the cytoplasm. The protein resides in the dynein axonemal particle. Required for cytoplasmic pre-assembly of axonemal dyneins, thereby playing a central role in motility in cilia and flagella. Involved in pre-assembly of dynein arm complexes in the cytoplasm before intraflagellar transport loads them for the ciliary compartment. This Xenopus laevis (African clawed frog) protein is Protein kintoun.